The primary structure comprises 118 residues: Telomere bouquet protein 2 (118 aa).

In terms of assembly, interacts with bqt1. The bqt1-bqt2-sad1 complex binds rap1.

It is found in the cytoplasm. Its subcellular location is the nucleus. The protein resides in the cytoskeleton. It localises to the microtubule organizing center. The protein localises to the spindle pole body. It is found in the chromosome. Its subcellular location is the telomere. Involved in chromosome segregation. During meiotic prophase, connects telomeres to the spindle pole body by forming a bridge between the telomere protein rap1 and the spindle pole body protein sad1. This chain is Telomere bouquet protein 2 (bqt2), found in Schizosaccharomyces pombe (strain 972 / ATCC 24843) (Fission yeast).